We begin with the raw amino-acid sequence, 338 residues long: Acyl-CoA:acyl-CoA alkyltransferase (338 aa).

2 residues coordinate Mn(2+): histidine 18 and aspartate 56. The Proton acceptor role is filled by glutamate 97. Cysteine 123 functions as the Acyl-thioester intermediate in the catalytic mechanism.

The protein belongs to the thiolase-like superfamily. OleA family. In terms of assembly, homodimer. Weakly associates with the OleBCD complex.

It localises to the cytoplasm. The enzyme catalyses a 1,2-saturated acyl-CoA + an acyl-CoA + H2O = an (R)-2-alkyl-3-oxoalkanoate + 2 CoA + H(+). Inhibited by cerulenin. Its function is as follows. Involved in olefin biosynthesis. Catalyzes a non-decarboxylative head-to-head Claisen condensation of two acyl-CoA molecules, generating an (R)-2-alkyl-3-oxoalkanoate. Is active with fatty acyl-CoA substrates that ranged from C(8) to C(16) in length, and is the most active with palmitoyl-CoA and myristoyl-CoA. This Xanthomonas campestris pv. campestris (strain ATCC 33913 / DSM 3586 / NCPPB 528 / LMG 568 / P 25) protein is Acyl-CoA:acyl-CoA alkyltransferase.